The chain runs to 400 residues: Large envelope protein (400 aa).

At Met-1 the chain carries N-acetylmethionine. Gly-2 carries N-myristoyl glycine; by host lipidation. The pre-S1 stretch occupies residues 2–119; sequence GGWSSKPRKG…PPLRDTHPQA (118 aa). Positions 2-174 are pre-S; it reads GGWSSKPRKG…LSKTGDPVPN (173 aa). Topologically, residues 2–181 are virion surface; in external conformation; sequence GGWSSKPRKG…VPNMENISSG (180 aa). The Intravirion; in internal conformation segment spans residues 2–253; sequence GGWSSKPRKG…PGYRWMCLRR (252 aa). Trp-4 carries an N-linked (GlcNAc...) asparagine glycan. 2 disordered regions span residues 29-50 and 85-118; these read QLDP…PHKD and LTTV…THPQ. The span at 96 to 106 shows a compositional bias: polar residues; it reads STSRQSGRQPT. Positions 120-174 are pre-S2; it reads MQWNSTTFHQTLQDPRVRALYFPAGGSSSGTVSPAQNTVSAISSTLSKTGDPVPN. A helical transmembrane segment spans residues 182–202; the sequence is LLGPLLVLQAGFFLLTKILTI. Topologically, residues 203-253 are intravirion; in external conformation; it reads PQSLDSWWTSLNFLGQTPVCLGQNSQSQISSHSLTCCPPICPGYRWMCLRR. Residues 254 to 274 traverse the membrane as a helical segment; the sequence is FIIFLCILLLCLIFLLVLLDC. Residues 275–348 lie on the Virion surface side of the membrane; that stretch reads QGMLPVCPLI…WASVRFSWLS (74 aa). N-linked (GlcNAc...) asparagine; by host glycosylation occurs at Asn-320. A helical membrane pass occupies residues 349-369; it reads LLVPFVQWFVGLSPTVWLSVI. Over 370 to 375 the chain is Intravirion; sequence WMMWFW. A helical membrane pass occupies residues 376-398; the sequence is GPSLCNILSPFMPLLPIFFCLWV. Residues 399 to 400 lie on the Virion surface side of the membrane; it reads YI.

It belongs to the orthohepadnavirus major surface antigen family. As to quaternary structure, interacts (via its myristoylated pre-S1 region) with the host SLC10A1/NTCP; this interaction is essential for viral entry. In terms of assembly, in its internal form (Li-HBsAg), interacts with the capsid protein and with the isoform S. Interacts with host chaperone CANX. Associates with host chaperone CANX through its pre-S2 N glycan; this association may be essential for isoform M proper secretion. As to quaternary structure, interacts with isoform L. Interacts with the antigens of satellite virus HDV (HDVAgs); this interaction is required for encapsidation of HDV genomic RNA. Post-translationally, isoform M is N-terminally acetylated by host at a ratio of 90%, and N-glycosylated by host at the pre-S2 region. Myristoylated; this modification is essential for its interaction with the host protein SLC10A1/NTCP.

The protein resides in the virion membrane. Functionally, the large envelope protein exists in two topological conformations, one which is termed 'external' or Le-HBsAg and the other 'internal' or Li-HBsAg. In its external conformation the protein attaches the virus to cell receptors and thereby initiating infection. This interaction determines the species specificity and liver tropism. This attachment induces virion internalization predominantly through caveolin-mediated endocytosis. The large envelope protein also assures fusion between virion membrane and endosomal membrane. In its internal conformation the protein plays a role in virion morphogenesis and mediates the contact with the nucleocapsid like a matrix protein. The middle envelope protein plays an important role in the budding of the virion. It is involved in the induction of budding in a nucleocapsid independent way. In this process the majority of envelope proteins bud to form subviral lipoprotein particles of 22 nm of diameter that do not contain a nucleocapsid. In Homo sapiens (Human), this protein is Large envelope protein.